Consider the following 273-residue polypeptide: Proteasome subunit beta type-10 (273 aa).

Residue Met-1 is modified to N-acetylmethionine. Positions Met-1–Gly-39 are cleaved as a propeptide — removed in mature form. Thr-40 functions as the Nucleophile in the catalytic mechanism. At Ser-230 the chain carries Phosphoserine.

This sequence belongs to the peptidase T1B family. In terms of assembly, the 26S proteasome consists of a 20S proteasome core and two 19S regulatory subunits. The 20S proteasome core is composed of 28 subunits that are arranged in four stacked rings, resulting in a barrel-shaped structure. The two end rings are each formed by seven alpha subunits, and the two central rings are each formed by seven beta subunits. The catalytic chamber with the active sites is on the inside of the barrel. Component of the immunoproteasome, where it displaces the equivalent housekeeping subunit PSMB7. Component of the spermatoproteasome, a form of the proteasome specifically found in testis. Post-translationally, autocleaved. The resulting N-terminal Thr residue of the mature subunit is responsible for the nucleophile proteolytic activity.

Its subcellular location is the cytoplasm. It localises to the nucleus. It carries out the reaction Cleavage of peptide bonds with very broad specificity.. The proteasome is a multicatalytic proteinase complex which is characterized by its ability to cleave peptides with Arg, Phe, Tyr, Leu, and Glu adjacent to the leaving group at neutral or slightly basic pH. The proteasome has an ATP-dependent proteolytic activity. This subunit is involved in antigen processing to generate class I binding peptides. This chain is Proteasome subunit beta type-10 (PSMB10), found in Bos taurus (Bovine).